The primary structure comprises 417 residues: Tyrosine--tRNA ligase (417 aa).

Tyrosine 39 contacts L-tyrosine. Residues 44 to 53 (PTASSLHAGS) carry the 'HIGH' region motif. Tyrosine 176 and glutamine 180 together coordinate L-tyrosine. Residues 236-240 (KMGKS) carry the 'KMSKS' region motif. Lysine 239 is an ATP binding site. In terms of domain architecture, S4 RNA-binding spans 350–417 (AGLLALLVQA…KKKHVLIKPL (68 aa)).

Belongs to the class-I aminoacyl-tRNA synthetase family. TyrS type 1 subfamily. As to quaternary structure, homodimer.

Its subcellular location is the cytoplasm. The enzyme catalyses tRNA(Tyr) + L-tyrosine + ATP = L-tyrosyl-tRNA(Tyr) + AMP + diphosphate + H(+). Functionally, catalyzes the attachment of tyrosine to tRNA(Tyr) in a two-step reaction: tyrosine is first activated by ATP to form Tyr-AMP and then transferred to the acceptor end of tRNA(Tyr). In Bartonella quintana (strain Toulouse) (Rochalimaea quintana), this protein is Tyrosine--tRNA ligase.